The following is a 228-amino-acid chain: Deoxyribose-phosphate aldolase (228 aa).

Residue Asp96 is the Proton donor/acceptor of the active site. Lys157 functions as the Schiff-base intermediate with acetaldehyde in the catalytic mechanism. Lys185 (proton donor/acceptor) is an active-site residue.

This sequence belongs to the DeoC/FbaB aldolase family. DeoC type 1 subfamily.

It is found in the cytoplasm. It carries out the reaction 2-deoxy-D-ribose 5-phosphate = D-glyceraldehyde 3-phosphate + acetaldehyde. It functions in the pathway carbohydrate degradation; 2-deoxy-D-ribose 1-phosphate degradation; D-glyceraldehyde 3-phosphate and acetaldehyde from 2-deoxy-alpha-D-ribose 1-phosphate: step 2/2. Its function is as follows. Catalyzes a reversible aldol reaction between acetaldehyde and D-glyceraldehyde 3-phosphate to generate 2-deoxy-D-ribose 5-phosphate. The polypeptide is Deoxyribose-phosphate aldolase (Picosynechococcus sp. (strain ATCC 27264 / PCC 7002 / PR-6) (Agmenellum quadruplicatum)).